Consider the following 553-residue polypeptide: Probable inactive serine/threonine-protein kinase samkD (553 aa).

One can recognise an SAM domain in the interval 24–90; it reads WDNETVCKWL…FEYQILKNCY (67 aa). The region spanning 134 to 393 is the Protein kinase domain; it reads YQYIETISKN…SKELLKSFWF (260 aa). ATP-binding positions include 140-148 and lysine 165; that span reads ISKNKFCEI.

The protein belongs to the protein kinase superfamily. Ser/Thr protein kinase family.

In Dictyostelium discoideum (Social amoeba), this protein is Probable inactive serine/threonine-protein kinase samkD (samkD).